The primary structure comprises 501 residues: Glutamyl-tRNA(Gln) amidotransferase subunit A (501 aa).

Active-site charge relay system residues include lysine 80 and serine 155. Catalysis depends on serine 179, which acts as the Acyl-ester intermediate.

It belongs to the amidase family. GatA subfamily. In terms of assembly, heterotrimer of A, B and C subunits.

The enzyme catalyses L-glutamyl-tRNA(Gln) + L-glutamine + ATP + H2O = L-glutaminyl-tRNA(Gln) + L-glutamate + ADP + phosphate + H(+). In terms of biological role, allows the formation of correctly charged Gln-tRNA(Gln) through the transamidation of misacylated Glu-tRNA(Gln) in organisms which lack glutaminyl-tRNA synthetase. The reaction takes place in the presence of glutamine and ATP through an activated gamma-phospho-Glu-tRNA(Gln). The polypeptide is Glutamyl-tRNA(Gln) amidotransferase subunit A (Cupriavidus pinatubonensis (strain JMP 134 / LMG 1197) (Cupriavidus necator (strain JMP 134))).